The following is a 269-amino-acid chain: Indole-3-glycerol phosphate synthase (269 aa).

It belongs to the TrpC family.

The catalysed reaction is 1-(2-carboxyphenylamino)-1-deoxy-D-ribulose 5-phosphate + H(+) = (1S,2R)-1-C-(indol-3-yl)glycerol 3-phosphate + CO2 + H2O. It participates in amino-acid biosynthesis; L-tryptophan biosynthesis; L-tryptophan from chorismate: step 4/5. The polypeptide is Indole-3-glycerol phosphate synthase (Rhodococcus opacus (strain B4)).